We begin with the raw amino-acid sequence, 818 residues long: BDNF/NT-3 growth factors receptor (818 aa).

Residues Met1–Gly31 form the signal peptide. 2 disulfides stabilise this stretch: Cys32-Cys38 and Cys36-Cys45. The Extracellular portion of the chain corresponds to Cys32–Ser426. The N-linked (GlcNAc...) asparagine glycan is linked to Asn66. Residues Tyr71–Leu92 form an LRR 1 repeat. N-linked (GlcNAc...) asparagine glycosylation occurs at Asn94. The stretch at Leu95 to Leu116 is one LRR 2 repeat. The N-linked (GlcNAc...) asparagine glycan is linked to Asn120. Cystine bridges form between Cys151-Cys175 and Cys153-Cys193. An Ig-like C2-type 1 domain is found at Pro196–Thr281. Residues Asn199, Asn204, Asn226, Asn253, Asn287, Asn324, and Asn337 are each glycosylated (N-linked (GlcNAc...) asparagine). Cys217 and Cys265 are disulfide-bonded. In terms of domain architecture, Ig-like C2-type 2 spans Thr295–Asn364. Cys301 and Cys344 are joined by a disulfide. The interval Gly384–Tyr394 is provides specificity for BDNF as ligand versus NTF3 and NTF4. The span at Pro400–Val418 shows a compositional bias: polar residues. The tract at residues Pro400–Asn420 is disordered. N-linked (GlcNAc...) asparagine glycosylation is present at Asn408. A helical membrane pass occupies residues Ile427 to Leu450. The Cytoplasmic segment spans residues Lys451 to Gly818. Residues Asn469 to Pro494 form a disordered region. A compositionally biased stretch (polar residues) spans Ser481 to Glu491. A Phosphotyrosine; by autocatalysis modification is found at Tyr512. Positions Ile534–Leu803 constitute a Protein kinase domain. Residues Leu540–Val548 and Lys568 each bind ATP. The Proton acceptor role is filled by Asp672. Residues Tyr698, Tyr702, Tyr703, and Tyr813 each carry the phosphotyrosine; by autocatalysis modification.

Belongs to the protein kinase superfamily. Tyr protein kinase family. Insulin receptor subfamily. As to quaternary structure, exists in a dynamic equilibrium between monomeric (low affinity) and dimeric (high affinity) structures. Interacts (phosphorylated upon activation by BDNF) with SHC1; mediates SHC1 phosphorylation and activation. Interacts (phosphorylated upon activation by BDNF) with PLCG1 and/or PLCG2; mediates PLCG1 phosphorylation and activation. Interacts with SH2B1 and SH2B2. Interacts with NGFR; may regulate the ligand specificity of the receptor. Interacts with SORCS2; this interaction is important for normal targeting to post-synaptic densities in response to high-frequency stimulation. Interacts (phosphorylated upon ligand-binding) with SH2D1A; regulates NTRK2. Interacts with SQSTM1 and KIDINS220. Interacts (phosphorylated upon ligand-binding) with FRS2; activates the MAPK signaling pathway. Interacts with APPL1. Interacts with MAPK8IP3/JIP3 and KLC1; interaction with KLC1 is mediated by MAPK8IP3/JIP3. Ligand-mediated auto-phosphorylation. As to expression, detected in embryonic brain and orsal root ganglia.

It localises to the cell membrane. It is found in the endosome membrane. Its subcellular location is the cell projection. The protein localises to the axon. The protein resides in the dendrite. It localises to the cytoplasm. It is found in the perinuclear region. Its subcellular location is the postsynaptic density. It carries out the reaction L-tyrosyl-[protein] + ATP = O-phospho-L-tyrosyl-[protein] + ADP + H(+). With respect to regulation, the neuronal activity and the influx of calcium positively regulate the kinase activity and the internalization of the receptor which are both important for active signaling. Regulated by NGFR that may control the internalization of the receptor. NGFR may also stimulate the activation by BDNF compared to NTF3 and NTF4. The formation of active receptors dimers able to fully transduce the ligand-mediated signal, may be negatively regulated by the formation of inactive heterodimers with the non-catalytic isoforms. In terms of biological role, receptor tyrosine kinase involved in the development and the maturation of the central and the peripheral nervous systems through regulation of neuron survival, proliferation, migration, differentiation, and synapse formation and plasticity. Receptor for BDNF/brain-derived neurotrophic factor and NTF4/neurotrophin-4. Alternatively can also bind NTF3/neurotrophin-3 which is less efficient in activating the receptor but regulates neuron survival through NTRK2. Upon ligand-binding, undergoes homodimerization, autophosphorylation and activation. Recruits, phosphorylates and/or activates several downstream effectors including SHC1, FRS2, SH2B1, SH2B2 and PLCG1 that regulate distinct overlapping signaling cascades. Through SHC1, FRS2, SH2B1, SH2B2 activates the GRB2-Ras-MAPK cascade that regulates for instance neuronal differentiation including neurite outgrowth. Through the same effectors controls the Ras-PI3 kinase-AKT1 signaling cascade that mainly regulates growth and survival. Through PLCG1 and the downstream protein kinase C-regulated pathways controls synaptic plasticity. Thereby, plays a role in learning and memory by regulating both short term synaptic function and long-term potentiation. PLCG1 also leads to NF-Kappa-B activation and the transcription of genes involved in cell survival. Hence, it is able to suppress anoikis, the apoptosis resulting from loss of cell-matrix interactions. May also play a role in neutrophin-dependent calcium signaling in glial cells and mediate communication between neurons and glia. This Gallus gallus (Chicken) protein is BDNF/NT-3 growth factors receptor (NTRK2).